Here is a 365-residue protein sequence, read N- to C-terminus: Glucan endo-1,3-beta-glucosidase, basic vacuolar isoform (365 aa).

The N-terminal stretch at 1–32 (MSTLHKHNTPQMAAITLLGLLLVASSIEIAGA) is a signal peptide. Glu128 serves as the catalytic Proton donor. Glu273 acts as the Nucleophile in catalysis. Residues 349–365 (VSGSVETNATASLISEI) constitute a propeptide, removed in mature form. N-linked (GlcNAc...) asparagine glycosylation is present at Asn356.

This sequence belongs to the glycosyl hydrolase 17 family.

It localises to the vacuole. The enzyme catalyses Hydrolysis of (1-&gt;3)-beta-D-glucosidic linkages in (1-&gt;3)-beta-D-glucans.. Functionally, implicated in the defense of plants against pathogens. The chain is Glucan endo-1,3-beta-glucosidase, basic vacuolar isoform (GN2) from Nicotiana plumbaginifolia (Leadwort-leaved tobacco).